Reading from the N-terminus, the 416-residue chain is Lactose permease (416 aa).

The Cytoplasmic segment spans residues 1-13; it reads MKLSELAPRERHN. A helical transmembrane segment spans residues 14–34; it reads FIYFMLFFFFYYFIMSAYFPF. Over 35-50 the chain is Periplasmic; that stretch reads FPVWLAEVNHLTKTET. The helical transmembrane segment at 51–71 threads the bilayer; the sequence is GIVFSCISLFAIIFQPVFGLI. The Cytoplasmic segment spans residues 72-80; the sequence is SDKLGLRKH. A helical membrane pass occupies residues 81–101; sequence LLWTITILLILFAPFFIFVFS. Position 102 (Pro-102) is a topological domain, periplasmic. Residues 103–123 form a helical membrane-spanning segment; that stretch reads LLQMNIMAGALVGGVYLGIVF. The Cytoplasmic portion of the chain corresponds to 124 to 149; that stretch reads SSRSGAVEAYIERVSRANRFEYGKVR. 2 helical membrane passes run 150-170 and 171-191; these read VSGC…FSID and PNIT…LLWV. The Cytoplasmic segment spans residues 192 to 223; that stretch reads SKPESSNSAEVIDALGANRQAFSMRTAAELFR. Residues 224–244 traverse the membrane as a helical segment; that stretch reads MPRFWGFIIYVVGVASVYDVF. Over 245–267 the chain is Periplasmic; that stretch reads DQQFANFFKGFFSSPQRGTEVFG. Residues 268-288 form a helical membrane-spanning segment; the sequence is FVTTGGELLNALIMFCAPAII. Topologically, residues 289-295 are cytoplasmic; sequence NRIGAKN. The next 2 membrane-spanning stretches (helical) occupy residues 296 to 316 and 317 to 337; these read ALLI…FATS and AVEV…LLVG. Over 338–353 the chain is Cytoplasmic; the sequence is TFKYISSAFKGKLSAT. Residues 354 to 374 traverse the membrane as a helical segment; sequence LFLIGFNLSKQLSSVVLSAWV. Over 375-384 the chain is Periplasmic; the sequence is GRMYDTVGFH. Residues 385–405 form a helical membrane-spanning segment; the sequence is QAYLILGCITLSFTVISLFTL. Residues 406 to 416 are Cytoplasmic-facing; sequence KGSKTLLPATA.

This sequence belongs to the major facilitator superfamily. Oligosaccharide:H(+) symporter (OHS) (TC 2.A.1.5) family.

The protein localises to the cell inner membrane. It carries out the reaction lactose(in) + H(+)(in) = lactose(out) + H(+)(out). In terms of biological role, responsible for transport of beta-galactosides into the cell, with the concomitant import of a proton (symport system). The polypeptide is Lactose permease (lacY) (Klebsiella oxytoca).